Here is a 511-residue protein sequence, read N- to C-terminus: Cytochrome P450 705A5 (511 aa).

A helical membrane pass occupies residues 12 to 30 (CFIFLLLCLFSRLSYDLFF). Cysteine 454 is a binding site for heme.

It belongs to the cytochrome P450 family. Heme serves as cofactor. As to expression, expressed primarily in the root epidermis.

Its subcellular location is the membrane. In terms of biological role, converts thalian-diol to a desaturated thalian-diol. This is Cytochrome P450 705A5 (CYP705A5) from Arabidopsis thaliana (Mouse-ear cress).